A 420-amino-acid polypeptide reads, in one-letter code: Gamma-glutamyl phosphate reductase (420 aa).

This sequence belongs to the gamma-glutamyl phosphate reductase family.

Its subcellular location is the cytoplasm. The enzyme catalyses L-glutamate 5-semialdehyde + phosphate + NADP(+) = L-glutamyl 5-phosphate + NADPH + H(+). It participates in amino-acid biosynthesis; L-proline biosynthesis; L-glutamate 5-semialdehyde from L-glutamate: step 2/2. Functionally, catalyzes the NADPH-dependent reduction of L-glutamate 5-phosphate into L-glutamate 5-semialdehyde and phosphate. The product spontaneously undergoes cyclization to form 1-pyrroline-5-carboxylate. This is Gamma-glutamyl phosphate reductase from Streptococcus pneumoniae (strain ATCC 700669 / Spain 23F-1).